We begin with the raw amino-acid sequence, 349 residues long: Myocyte-specific enhancer factor 2B (349 aa).

One can recognise an MADS-box domain in the interval arginine 3–tyrosine 57. Positions alanine 58–glutamine 86 form a DNA-binding region, mef2-type. Disordered stretches follow at residues glycine 237–arginine 317 and alanine 330–arginine 349.

Belongs to the MEF2 family. In terms of assembly, heterodimer. Interacts with HDAC9. Interacts with HDAC7. In terms of tissue distribution, highest expression found in embryonic heart and skeletal muscle. Low levels found in adult spleen, lung and testis while no expression is found in adult heart, brain or skeletal muscle.

Its subcellular location is the nucleus. Its function is as follows. Transcriptional activator which binds specifically to the MEF2 element, 5'-YTA[AT](4)TAR-3', found in numerous muscle-specific genes. Activates transcription via this element. May be involved in muscle-specific and/or growth factor-related transcription. This Mus musculus (Mouse) protein is Myocyte-specific enhancer factor 2B (Mef2b).